The sequence spans 507 residues: ATP synthase subunit alpha, chloroplastic (507 aa).

170-177 provides a ligand contact to ATP; the sequence is GDRQTGKT.

This sequence belongs to the ATPase alpha/beta chains family. As to quaternary structure, F-type ATPases have 2 components, CF(1) - the catalytic core - and CF(0) - the membrane proton channel. CF(1) has five subunits: alpha(3), beta(3), gamma(1), delta(1), epsilon(1). CF(0) has four main subunits: a, b, b' and c.

The protein resides in the plastid. It localises to the chloroplast thylakoid membrane. The catalysed reaction is ATP + H2O + 4 H(+)(in) = ADP + phosphate + 5 H(+)(out). Produces ATP from ADP in the presence of a proton gradient across the membrane. The alpha chain is a regulatory subunit. The sequence is that of ATP synthase subunit alpha, chloroplastic from Marchantia polymorpha (Common liverwort).